The sequence spans 246 residues: Large ribosomal subunit protein uL4 (246 aa).

Positions 37-103 (AAQANRKQDY…TEKDRSLDLN (67 aa)) are disordered. Residues 92–103 (PKTEKDRSLDLN) are compositionally biased toward basic and acidic residues.

It belongs to the universal ribosomal protein uL4 family. In terms of assembly, part of the 50S ribosomal subunit. Interacts weakly with proteins L18e, L24 and L37e. Has been cross-linked to L18e.

In terms of biological role, one of the primary rRNA binding proteins, this protein initially binds near the 5'-end of the 23S rRNA. It is important during the early stages of 50S assembly. Makes multiple contacts with different domains of the 23S rRNA in the assembled 50S subunit. Functionally, forms part of the polypeptide exit tunnel, in which it helps forms a bend with protein L22. Contacts the macrolide antibiotic spiramycin in the polypeptide exit tunnel. The polypeptide is Large ribosomal subunit protein uL4 (rpl4) (Haloarcula marismortui (strain ATCC 43049 / DSM 3752 / JCM 8966 / VKM B-1809) (Halobacterium marismortui)).